The primary structure comprises 118 residues: Large ribosomal subunit protein bL20 (118 aa).

It belongs to the bacterial ribosomal protein bL20 family.

Binds directly to 23S ribosomal RNA and is necessary for the in vitro assembly process of the 50S ribosomal subunit. It is not involved in the protein synthesizing functions of that subunit. In Psychrobacter sp. (strain PRwf-1), this protein is Large ribosomal subunit protein bL20.